A 392-amino-acid chain; its full sequence is Caveolae-associated protein 1 (392 aa).

N-acetylmethionine is present on Met1. Residues Met1 to Glu10 are compositionally biased toward basic and acidic residues. The interval Met1–Leu45 is disordered. The tract at residues Met1 to Lys100 is required for homotrimerization and for interaction with CAVIN2 and CAVIN3. Ser21 and Ser38 each carry phosphoserine. Thr40 carries the phosphothreonine modification. Phosphoserine is present on residues Ser42 and Ser48. The nuclear export signal stretch occupies residues Val54–Ile64. The segment at Leu55 to Leu77 is leucine-zipper 1. Lys118 is covalently cross-linked (Glycyl lysine isopeptide (Lys-Gly) (interchain with G-Cter in SUMO2)). Ser120 carries the phosphoserine modification. Lys124 participates in a covalent cross-link: Glycyl lysine isopeptide (Lys-Gly) (interchain with G-Cter in SUMO2). Residues Lys138–Lys154 are nuclear localization signal. Tyr158 carries the phosphotyrosine modification. Residue Lys163 forms a Glycyl lysine isopeptide (Lys-Gly) (interchain with G-Cter in SUMO1); alternate linkage. Lys163 is covalently cross-linked (Glycyl lysine isopeptide (Lys-Gly) (interchain with G-Cter in SUMO2); alternate). Residue Lys167 forms a Glycyl lysine isopeptide (Lys-Gly) (interchain with G-Cter in SUMO2) linkage. Positions Leu168–Leu188 are leucine-zipper 2. Phosphoserine occurs at positions 169 and 171. Residue Lys172 forms a Glycyl lysine isopeptide (Lys-Gly) (interchain with G-Cter in SUMO2) linkage. 2 positions are modified to phosphoserine: Ser173 and Ser177. The span at Ser173–Lys183 shows a compositional bias: basic and acidic residues. The tract at residues Ser173 to Asp197 is disordered. Over residues Glu184–Asp197 the composition is skewed to acidic residues. Position 198 is a phosphothreonine (Thr198). A coiled-coil region spans residues Ile201–Val284. A phosphoserine mark is found at Ser204 and Ser205. Residues Lys235–Arg251 form a nuclear localization signal region. The interval Leu259–Leu299 is leucine-zipper 3. Ser302 is subject to Phosphoserine. Position 304 is a phosphothreonine (Thr304). At Tyr310 the chain carries Phosphotyrosine. Lys328 participates in a covalent cross-link: Glycyl lysine isopeptide (Lys-Gly) (interchain with G-Cter in SUMO2). Residues Gly347–Ser367 form a disordered region. Phosphoserine occurs at positions 367, 368, 381, 389, and 391.

Belongs to the CAVIN family. As to quaternary structure, component of the CAVIN complex composed of CAVIN1, CAVIN2, CAVIN3 and CAVIN4. Homotrimer. Interacts with LIPE in the adipocyte cytoplasm. Interacts with RNA polymerase I subunit POLR1A/RPA1. Interacts with TTF1. Binds the 3' end of pre-rRNA. Interacts with transcription factor ZNF148. Interacts with CAV1, CAVIN2 and CAVIN3. Interacts with CAVIN4. Post-translationally, phosphorylated. Present in active and inactive forms. Changes in phosphorylation pattern may alter activity. Phosphorylation at Tyr-158 is essential for its function in the regulation of the ribosomal transcriptional activity. Monoubiquitinated. As to expression, expressed in the heart, stomach, adipose tissue and lung (at protein level). Expressed in testis, kidney, muscle, liver, spleen and brain.

Its subcellular location is the membrane. The protein resides in the caveola. It localises to the cell membrane. The protein localises to the microsome. It is found in the endoplasmic reticulum. Its subcellular location is the cytoplasm. The protein resides in the cytosol. It localises to the mitochondrion. The protein localises to the nucleus. Plays an important role in caveolae formation and organization. Essential for the formation of caveolae in all tissues. Core component of the CAVIN complex which is essential for recruitment of the complex to the caveolae in presence of calveolin-1 (CAV1). Essential for normal oligomerization of CAV1. Promotes ribosomal transcriptional activity in response to metabolic challenges in the adipocytes and plays an important role in the formation of the ribosomal transcriptional loop. Dissociates transcription complexes paused by DNA-bound TTF1, thereby releasing both RNA polymerase I and pre-RNA from the template. The caveolae biogenesis pathway is required for the secretion of proteins such as GASK1A. The sequence is that of Caveolae-associated protein 1 (Cavin1) from Mus musculus (Mouse).